A 299-amino-acid polypeptide reads, in one-letter code: 4-diphosphocytidyl-2-C-methyl-D-erythritol kinase (299 aa).

Lysine 16 is an active-site residue. Residue 101 to 111 (PVAAGIGGGSA) coordinates ATP. Residue aspartate 143 is part of the active site.

The protein belongs to the GHMP kinase family. IspE subfamily.

The catalysed reaction is 4-CDP-2-C-methyl-D-erythritol + ATP = 4-CDP-2-C-methyl-D-erythritol 2-phosphate + ADP + H(+). Its pathway is isoprenoid biosynthesis; isopentenyl diphosphate biosynthesis via DXP pathway; isopentenyl diphosphate from 1-deoxy-D-xylulose 5-phosphate: step 3/6. Catalyzes the phosphorylation of the position 2 hydroxy group of 4-diphosphocytidyl-2C-methyl-D-erythritol. This chain is 4-diphosphocytidyl-2-C-methyl-D-erythritol kinase, found in Rhodopseudomonas palustris (strain ATCC BAA-98 / CGA009).